Reading from the N-terminus, the 1281-residue chain is MVRKKNPPLRNVASEGEGQILEPIGTESKVSGKNKEFSADQMSENTDQSDAAELNHKEEHSLHVQDPSSSSKKDLKSAVLSEKAGFNYESPSKGGNFPSFPHDEVTDRNMLAFSSPAAGGVCEPLKSPQRAEADDPQDMACTPSGDSLETKEDQKMSPKATEETGQAQSGQANCQGLSPVSVASKNPQVPSDGGVRLNKSKTDLLVNDNPDPAPLSPELQDFKCNICGYGYYGNDPTDLIKHFRKYHLGLHNRTRQDAELDSKILALHNMVQFSHSKDFQKVNRSVFSGVLQDINSSRPVLLNGTYDVQVTSGGTFIGIGRKTPDCQGNTKYFRCKFCNFTYMGNSSTELEQHFLQTHPNKIKASLPSSEVAKPSEKNSNKSIPALQSSDSGDLGKWQDKITVKAGDDTPVGYSVPIKPLDSSRQNGTEATSYYWCKFCSFSCESSSSLKLLEHYGKQHGAVQSGGLNPELNDKLSRGSVINQNDLAKSSEGETMTKTDKSSSGAKKKDFSSKGAEDNMVTSYNCQFCDFRYSKSHGPDVIVVGPLLRHYQQLHNIHKCTIKHCPFCPRGLCSPEKHLGEITYPFACRKSNCSHCALLLLHLSPGAAGSSRVKHQCHQCSFTTPDVDVLLFHYESVHESQASDVKQEANHLQGSDGQQSVKESKEHSCTKCDFITQVEEEISRHYRRAHSCYKCRQCSFTAADTQSLLEHFNTVHCQEQDITTANGEEDGHAISTIKEEPKIDFRVYNLLTPDSKMGEPVSESVVKREKLEEKDGLKEKVWTESSSDDLRNVTWRGADILRGSPSYTQASLGLLTPVSGTQEQTKTLRDSPNVEAAHLARPIYGLAVETKGFLQGAPAGGEKSGALPQQYPASGENKSKDESQSLLRRRRGSGVFCANCLTTKTSLWRKNANGGYVCNACGLYQKLHSTPRPLNIIKQNNGEQIIRRRTRKRLNPEALQAEQLNKQQRGSNEEQVNGSPLERRSEDHLTESHQREIPLPSLSKYEAQGSLTKSHSAQQPVLVSQTLDIHKRMQPLHIQIKSPQESTGDPGNSSSVSEGKGSSERGSPIEKYMRPAKHPNYSPPGSPIEKYQYPLFGLPFVHNDFQSEADWLRFWSKYKLSVPGNPHYLSHVPGLPNPCQNYVPYPTFNLPPHFSAVGSDNDIPLDLAIKHSRPGPTANGASKEKTKAPPNVKNEGPLNVVKTEKVDRSTQDELSTKCVHCGIVFLDEVMYALHMSCHGDSGPFQCSICQHLCTDKYDFTTHIQRGLHRNNAQVEKNGKPKE.

The segment at 1 to 198 (MVRKKNPPLR…VPSDGGVRLN (198 aa)) is disordered. A Glycyl lysine isopeptide (Lys-Gly) (interchain with G-Cter in SUMO2) cross-link involves residue lysine 29. Positions 40-49 (DQMSENTDQS) are enriched in polar residues. Positions 53–63 (ELNHKEEHSLH) are enriched in basic and acidic residues. Residue lysine 76 forms a Glycyl lysine isopeptide (Lys-Gly) (interchain with G-Cter in SUMO2) linkage. Phosphoserine is present on residues serine 90 and serine 127. The span at 148-162 (LETKEDQKMSPKATE) shows a compositional bias: basic and acidic residues. The segment covering 163 to 189 (ETGQAQSGQANCQGLSPVSVASKNPQV) has biased composition (polar residues). A phosphoserine mark is found at serine 178 and serine 216. The C2H2-type 1; atypical zinc finger occupies 222 to 247 (FKCNICGYGYYGNDPTDLIKHFRKYH). A Glycyl lysine isopeptide (Lys-Gly) (interchain with G-Cter in SUMO2) cross-link involves residue lysine 263. A C2H2-type 2; atypical zinc finger spans residues 333–358 (FRCKFCNFTYMGNSSTELEQHFLQTH). The segment at 365–394 (SLPSSEVAKPSEKNSNKSIPALQSSDSGDL) is disordered. The span at 380-391 (NKSIPALQSSDS) shows a compositional bias: polar residues. Residues lysine 418, lysine 457, lysine 474, and lysine 488 each participate in a glycyl lysine isopeptide (Lys-Gly) (interchain with G-Cter in SUMO2) cross-link. A disordered region spans residues 483 to 512 (QNDLAKSSEGETMTKTDKSSSGAKKKDFSS). A compositionally biased stretch (basic and acidic residues) spans 488–512 (KSSEGETMTKTDKSSSGAKKKDFSS). The segment at 614–637 (HQCHQCSFTTPDVDVLLFHYESVH) adopts a C2H2-type 3; atypical zinc-finger fold. The segment at 635–819 (SVHESQASDV…SLGLLTPVSG (185 aa)) is mediates interaction with GLI3. Residue lysine 645 forms a Glycyl lysine isopeptide (Lys-Gly) (interchain with G-Cter in SUMO2) linkage. 2 consecutive C2H2-type zinc fingers follow at residues 666–689 (HSCT…RRAH) and 692–715 (YKCR…NTVH). Lysine 737 is covalently cross-linked (Glycyl lysine isopeptide (Lys-Gly) (interchain with G-Cter in SUMO2)). At threonine 751 the chain carries Phosphothreonine. Residue lysine 755 forms a Glycyl lysine isopeptide (Lys-Gly) (interchain with G-Cter in SUMO2) linkage. Residue lysine 766 forms a Glycyl lysine isopeptide (Lys-Gly) (interchain with G-Cter in SUMO1); alternate linkage. Lysine 766 participates in a covalent cross-link: Glycyl lysine isopeptide (Lys-Gly) (interchain with G-Cter in SUMO2); alternate. Residues lysine 825, lysine 850, lysine 877, and lysine 879 each participate in a glycyl lysine isopeptide (Lys-Gly) (interchain with G-Cter in SUMO2) cross-link. The segment at 856-887 (APAGGEKSGALPQQYPASGENKSKDESQSLLR) is disordered. The segment at 896–920 (CANCLTTKTSLWRKNANGGYVCNAC) adopts a GATA-type zinc-finger fold. Glycyl lysine isopeptide (Lys-Gly) (interchain with G-Cter in SUMO2) cross-links involve residues lysine 925, lysine 937, and lysine 965. Residues 961–977 (EQLNKQQRGSNEEQVNG) show a composition bias toward polar residues. A disordered region spans residues 961–1000 (EQLNKQQRGSNEEQVNGSPLERRSEDHLTESHQREIPLPS). The residue at position 978 (serine 978) is a Phosphoserine. A compositionally biased stretch (basic and acidic residues) spans 980 to 995 (LERRSEDHLTESHQRE). Residues 985–1184 (EDHLTESHQR…PTANGASKEK (200 aa)) are mediates interaction with RNF4. Glycyl lysine isopeptide (Lys-Gly) (interchain with G-Cter in SUMO2) cross-links involve residues lysine 1003, lysine 1012, lysine 1030, and lysine 1040. Positions 1039-1080 (IKSPQESTGDPGNSSSVSEGKGSSERGSPIEKYMRPAKHPNY) are disordered. The span at 1040 to 1049 (KSPQESTGDP) shows a compositional bias: polar residues. At serine 1041 the chain carries Phosphoserine. Over residues 1050-1059 (GNSSSVSEGK) the composition is skewed to low complexity. The segment covering 1060 to 1072 (GSSERGSPIEKYM) has biased composition (basic and acidic residues). Serine 1066 carries the post-translational modification Phosphoserine. A Glycyl lysine isopeptide (Lys-Gly) (interchain with G-Cter in SUMO2) cross-link involves residue lysine 1070. Serine 1085 carries the post-translational modification Phosphoserine. The interval 1163–1281 (PLDLAIKHSR…QVEKNGKPKE (119 aa)) is transcriptional repressor domain. Residues 1168 to 1196 (IKHSRPGPTANGASKEKTKAPPNVKNEGP) form a disordered region. Residues lysine 1192 and lysine 1201 each participate in a glycyl lysine isopeptide (Lys-Gly) (interchain with G-Cter in SUMO2); alternate cross-link. Glycyl lysine isopeptide (Lys-Gly) (interchain with G-Cter in SUMO); alternate cross-links involve residues lysine 1192 and lysine 1201. Residue lysine 1201 forms a Glycyl lysine isopeptide (Lys-Gly) (interchain with G-Cter in SUMO1); alternate linkage. C2H2-type zinc fingers lie at residues 1215–1237 (TKCV…MSCH) and 1243–1267 (FQCS…RGLH).

In terms of assembly, interacts with RNF4; regulates TRPS1 repressor activity. Interacts specifically with the activator form of GLI3 (GLI3A) but not with the repressor form (GLI3R). Sumoylated. Sumoylation in the repressor domain inhibits the transcription repression activity. Sumoylation on Lys-1201 is the major site. Appears to be sumoylated on multiple sites. As to expression, ubiquitously expressed in the adult. Found in fetal brain, lung, kidney, liver, spleen and thymus. More highly expressed in androgen-dependent than in androgen-independent prostate cancer cells.

The protein localises to the nucleus. In terms of biological role, transcriptional repressor. Binds specifically to GATA sequences and represses expression of GATA-regulated genes at selected sites and stages in vertebrate development. Regulates chondrocyte proliferation and differentiation. Executes multiple functions in proliferating chondrocytes, expanding the region of distal chondrocytes, activating proliferation in columnar cells and supporting the differentiation of columnar into hypertrophic chondrocytes. The chain is Zinc finger transcription factor Trps1 (TRPS1) from Homo sapiens (Human).